Here is a 561-residue protein sequence, read N- to C-terminus: Formate--tetrahydrofolate ligase (561 aa).

Residue 66–73 (TPAGEGKT) coordinates ATP.

It belongs to the formate--tetrahydrofolate ligase family.

It carries out the reaction (6S)-5,6,7,8-tetrahydrofolate + formate + ATP = (6R)-10-formyltetrahydrofolate + ADP + phosphate. It participates in one-carbon metabolism; tetrahydrofolate interconversion. The protein is Formate--tetrahydrofolate ligase of Methylibium petroleiphilum (strain ATCC BAA-1232 / LMG 22953 / PM1).